We begin with the raw amino-acid sequence, 491 residues long: Nicotinamide phosphoribosyltransferase (491 aa).

Met1 carries the N-acetylmethionine modification. Tyr188 carries the phosphotyrosine modification. Residue Arg196 coordinates diphosphate. Asp219 is a binding site for beta-nicotinamide D-ribonucleotide. His247 and Arg311 together coordinate diphosphate. Beta-nicotinamide D-ribonucleotide is bound by residues 311-313, 353-354, Gly384, and Arg392; these read RPD and GD. Ser472 bears the Phosphoserine mark.

It belongs to the NAPRTase family. Homodimer.

It is found in the nucleus. The protein resides in the cytoplasm. Its subcellular location is the secreted. It carries out the reaction beta-nicotinamide D-ribonucleotide + diphosphate = 5-phospho-alpha-D-ribose 1-diphosphate + nicotinamide + H(+). It functions in the pathway cofactor biosynthesis; NAD(+) biosynthesis; nicotinamide D-ribonucleotide from 5-phospho-alpha-D-ribose 1-diphosphate and nicotinamide: step 1/1. Catalyzes the condensation of nicotinamide with 5-phosphoribosyl-1-pyrophosphate to yield nicotinamide mononucleotide, an intermediate in the biosynthesis of NAD. It is the rate limiting component in the mammalian NAD biosynthesis pathway. The secreted form behaves both as a cytokine with immunomodulating properties and an adipokine with anti-diabetic properties, it has no enzymatic activity, partly because of lack of activation by ATP, which has a low level in extracellular space and plasma. Plays a role in the modulation of circadian clock function. Plays a role in the modulation of circadian clock function. NAMPT-dependent oscillatory production of NAD regulates oscillation of clock target gene expression by releasing the core clock component: CLOCK-BMAL1 heterodimer from NAD-dependent SIRT1-mediated suppression. The polypeptide is Nicotinamide phosphoribosyltransferase (NAMPT) (Sus scrofa (Pig)).